The primary structure comprises 605 residues: DNA mismatch repair protein MutL (605 aa).

Belongs to the DNA mismatch repair MutL/HexB family.

In terms of biological role, this protein is involved in the repair of mismatches in DNA. It is required for dam-dependent methyl-directed DNA mismatch repair. May act as a 'molecular matchmaker', a protein that promotes the formation of a stable complex between two or more DNA-binding proteins in an ATP-dependent manner without itself being part of a final effector complex. The polypeptide is DNA mismatch repair protein MutL (Sinorhizobium medicae (strain WSM419) (Ensifer medicae)).